Consider the following 218-residue polypeptide: MDKSESTGAGRNRRRRPRRGSRSAPSSADANFRVLSQQLSRLNKTLAAGRPTINHPTFVGSERCKPGYTFTSITLKPPKIDRESYYGKRLLLPDSVTEYDKKLVSRIQIRVNPLPKFDSTVWVTVRKVPASSDLSVAAISAMFADGASPVLVYQYAASGVQANNKLLYDLSAMRADIGDMRKYAVLVYSKDDTLETDELVLHVDVEHQRIPTSGVLPV.

Residue Met1 is modified to N-acetylmethionine; by host. The segment at 1–28 (MDKSESTGAGRNRRRRPRRGSRSAPSSA) is disordered. Over residues 11 to 21 (RNRRRRPRRGS) the composition is skewed to basic residues.

The protein belongs to the cucumovirus capsid protein family.

The protein localises to the virion. Functionally, capsid protein. Probably binds RNA and plays a role in packaging. This chain is Capsid protein, found in Cucumis sativus (Cucumber).